The following is a 302-amino-acid chain: Beta-lactamase (302 aa).

Positions 1 to 11 are enriched in basic residues; it reads MADRRRVHAWA. The first 29 residues, 1-29, serve as a signal peptide directing secretion; the sequence is MADRRRVHAWARARPAAPEPAPPTPSAAA. Positions 1 to 43 are disordered; it reads MADRRRVHAWARARPAAPEPAPPTPSAAAPSVAPGPAATPPDP. Over residues 26 to 36 the composition is skewed to low complexity; the sequence is SAAAPSVAPGP. S85 functions as the Acyl-ester intermediate in the catalytic mechanism. Residue S143 coordinates substrate. E179 acts as the Proton acceptor in catalysis. 247-249 lines the substrate pocket; the sequence is KTG.

It belongs to the class-A beta-lactamase family.

The protein resides in the secreted. It carries out the reaction a beta-lactam + H2O = a substituted beta-amino acid. Active on penicillins but not on cephalosporins. This Amycolatopsis lactamdurans (Nocardia lactamdurans) protein is Beta-lactamase (bla).